A 203-amino-acid polypeptide reads, in one-letter code: Large ribosomal subunit protein eL15 (203 aa).

The interval Ala166–Arg203 is disordered. The span at Lys169–Lys192 shows a compositional bias: basic residues. Residues Arg193–Arg203 show a composition bias toward polar residues.

Belongs to the eukaryotic ribosomal protein eL15 family.

The chain is Large ribosomal subunit protein eL15 (rpl15) from Aspergillus niger.